Consider the following 570-residue polypeptide: Interleukin-1 receptor accessory protein (570 aa).

The signal sequence occupies residues 1–20 (MTLLWCVVSLYFYGILQSDA). 3 Ig-like C2-type domains span residues 21-128 (SERC…VAFP), 141-230 (PMKL…RTLT), and 242-348 (PPVI…AKVK). The Extracellular portion of the chain corresponds to 21–367 (SERCDDWGLD…VELACGFGAT (347 aa)). 5 disulfides stabilise this stretch: cysteine 24-cysteine 122, cysteine 47-cysteine 114, cysteine 137-cysteine 181, cysteine 160-cysteine 212, and cysteine 266-cysteine 332. Asparagine 57 carries N-linked (GlcNAc...) asparagine glycosylation. The interval 69-85 (IWYWTRQDRDLEEPINF) is essential for interaction with PTPRD. N-linked (GlcNAc...) asparagine glycosylation is found at asparagine 107, asparagine 111, and asparagine 118. 3 N-linked (GlcNAc...) asparagine glycosylation sites follow: asparagine 196, asparagine 209, and asparagine 299. The chain crosses the membrane as a helical span at residues 368–388 (VLLVVILIVVYHVYWLEMVLF). At 389–570 (YRAHFGTDET…GLSYSSLKNV (182 aa)) the chain is on the cytoplasmic side. In terms of domain architecture, TIR spans 403-546 (KEYDIYVSYA…RFWKQLQVAM (144 aa)). Glutamate 482 is an active-site residue. Residues 549–570 (KKSPRRSSSDEQGLSYSSLKNV) form a disordered region. Phosphoserine is present on serine 557. Residues 558-570 (DEQGLSYSSLKNV) show a composition bias toward polar residues.

It belongs to the interleukin-1 receptor family. The interleukin-36 receptor complex is a heterodimer of IL1RL2 and IL1RAP; the association is inhibited by IL36RN. The interleukin-1 receptor complex is a heterodimer of IL1R1 and IL1RAP. Associates with IL1R2 to form a non-signaling interleukin-1 receptor complex. Isoform 4 interacts with IL1R1 in an interleukin-1-dependent manner. Interacts with IL-33-bound IL1RL1 to form the minimal interleukin-33 signaling complex with a 1:1:1 stoichiometry. Interacts with KIT (independently of stimulation with KITLG/SCF). A mast cell-specific KITLG/SCF-induced interleukin-33 signaling complex contains IL1RL1, IL1RAP, KIT and MYD88. Interacts (via the first immunoglobilin domain) with PTPRD (via the third immunoglobilin domain); induces pre- and postsynaptic differentiation of neurons. Detected in liver, skin, placenta, thymus and lung. Isoform 4 is predominantly expressed in brain. Overexpressed on candidate chronic myeloid leukemia (CML) stem cells, hematopoietic stem cells and mononuclear cells of patients with acute myeloid leukemia (AML). Overexpressed in patients with chronic obstructive pulmonary disease (COPD). Expressed in T-helper 1 (Th1) and T-helper 2 (Th2) cell subsets.

It is found in the cell membrane. It localises to the secreted. The catalysed reaction is NAD(+) + H2O = ADP-D-ribose + nicotinamide + H(+). Functionally, coreceptor for IL1RL2 in the IL-36 signaling system. Coreceptor with IL1R1 in the IL-1 signaling system. Associates with IL1R1 bound to IL1B to form the high affinity interleukin-1 receptor complex which mediates interleukin-1-dependent activation of NF-kappa-B and other pathways. Signaling involves the recruitment of adapter molecules such as TOLLIP, MYD88, and IRAK1 or IRAK2 via the respective TIR domains of the receptor/coreceptor subunits. Recruits TOLLIP to the signaling complex. Does not bind to interleukin-1 alone; binding of IL1RN to IL1R1, prevents its association with IL1R1 to form a signaling complex. The cellular response is modulated through a non-signaling association with the membrane IL1R2 decoy receptor. Coreceptor for IL1RL1 in the IL-33 signaling system. Can bidirectionally induce pre- and postsynaptic differentiation of neurons by trans-synaptically binding to PTPRD. May play a role in IL1B-mediated costimulation of IFNG production from T-helper 1 (Th1) cells. In terms of biological role, associates with secreted ligand-bound IL1R2 and increases the affinity of secreted IL1R2 for IL1B; this complex formation may be the dominant mechanism for neutralization of IL1B by secreted/soluble receptors. Enhances the ability of secreted IL1R1 to inhibit IL-33 signaling. Its function is as follows. Unable to mediate canonical IL-1 signaling. Required for Src phosphorylation by IL1B. May be involved in IL1B-potentiated NMDA-induced calcium influx in neurons. This Homo sapiens (Human) protein is Interleukin-1 receptor accessory protein (IL1RAP).